A 423-amino-acid polypeptide reads, in one-letter code: MTELIELKEIEERVILVAVSTGDEEDAKGSLDELEELVKTAGAVAVDKVIQNRERIHPGTYLGKGKIEEIKDRIWELDATGIVCDDELSPAQLRNLEGALDTKVMDRTMVILDIFASRAVTREGKIQVELAQLRYRSARLVGLRSSLSRLGGGIGTRGPGEKKLEMDRRLIHDRIGMLKAELEDVKRHREVVRQQRDKNHVPAAAIVGYTNAGKSTLLNRLTDAGILAEDKLFATLDPTTRNLSLPGGQQILLTDTVGFIRKLPHHLIEAFKSTLEEAKYSDIILHVVDCSNPQMDMQMYVVYETLRELGICDKIMITVFNKIDAADAGVILRDVSSDHQVRISAKTGEGLDELINLLETILRNQKVYLERIYSYKEAGKIQLIRKYGQLLKEEYQEDGIFVNAYVPSELFASLADNADAFNE.

Residues 202-366 (PAAAIVGYTN…LLETILRNQK (165 aa)) form the Hflx-type G domain. Residues 208 to 215 (GYTNAGKS), 233 to 237 (FATLD), 255 to 258 (DTVG), 321 to 324 (NKID), and 344 to 346 (SAK) contribute to the GTP site. Positions 215 and 235 each coordinate Mg(2+).

Belongs to the TRAFAC class OBG-HflX-like GTPase superfamily. HflX GTPase family. Monomer. Associates with the 50S ribosomal subunit. It depends on Mg(2+) as a cofactor.

The protein resides in the cytoplasm. GTPase that associates with the 50S ribosomal subunit and may have a role during protein synthesis or ribosome biogenesis. The protein is GTPase HflX of Lacrimispora saccharolytica (strain ATCC 35040 / DSM 2544 / NRCC 2533 / WM1) (Clostridium saccharolyticum).